A 298-amino-acid chain; its full sequence is tRNA U34 carboxymethyltransferase (298 aa).

Carboxy-S-adenosyl-L-methionine-binding positions include Lys-69, Trp-83, Lys-88, Gly-107, 129 to 131 (DPS), 156 to 157 (VE), Tyr-176, and Arg-291.

It belongs to the class I-like SAM-binding methyltransferase superfamily. CmoB family. As to quaternary structure, homotetramer.

It carries out the reaction carboxy-S-adenosyl-L-methionine + 5-hydroxyuridine(34) in tRNA = 5-carboxymethoxyuridine(34) in tRNA + S-adenosyl-L-homocysteine + H(+). Catalyzes carboxymethyl transfer from carboxy-S-adenosyl-L-methionine (Cx-SAM) to 5-hydroxyuridine (ho5U) to form 5-carboxymethoxyuridine (cmo5U) at position 34 in tRNAs. This is tRNA U34 carboxymethyltransferase from Campylobacter curvus (strain 525.92).